Reading from the N-terminus, the 235-residue chain is Geranylgeranylglyceryl phosphate synthase (235 aa).

Lysine 13 is a sn-glycerol 1-phosphate binding site. 2 residues coordinate Mg(2+): aspartate 15 and threonine 42. Sn-glycerol 1-phosphate-binding positions include 162-167 (YVEYSG), glycine 192, and 212-213 (GD).

This sequence belongs to the GGGP/HepGP synthase family. Group I subfamily. Requires Mg(2+) as cofactor.

The protein localises to the cytoplasm. It carries out the reaction sn-glycerol 1-phosphate + (2E,6E,10E)-geranylgeranyl diphosphate = sn-3-O-(geranylgeranyl)glycerol 1-phosphate + diphosphate. It participates in membrane lipid metabolism; glycerophospholipid metabolism. In terms of biological role, prenyltransferase that catalyzes the transfer of the geranylgeranyl moiety of geranylgeranyl diphosphate (GGPP) to the C3 hydroxyl of sn-glycerol-1-phosphate (G1P). This reaction is the first ether-bond-formation step in the biosynthesis of archaeal membrane lipids. This chain is Geranylgeranylglyceryl phosphate synthase, found in Natronomonas pharaonis (strain ATCC 35678 / DSM 2160 / CIP 103997 / JCM 8858 / NBRC 14720 / NCIMB 2260 / Gabara) (Halobacterium pharaonis).